A 459-amino-acid chain; its full sequence is Bifunctional protein GlmU (459 aa).

The pyrophosphorylase stretch occupies residues 1–230; the sequence is MTTRNTIILA…FDESMGVNDR (230 aa). UDP-N-acetyl-alpha-D-glucosamine contacts are provided by residues 9–12, Lys23, Gln73, 78–79, 101–103, Gly140, Glu155, Asn170, and Asn228; these read LAAG, GT, and SGD. Position 103 (Asp103) interacts with Mg(2+). Mg(2+) is bound at residue Asn228. Positions 231 to 251 are linker; sequence VALSAATKIMRDRINEAHMRD. Residues 252 to 459 form an N-acetyltransferase region; sequence GVTLIDPATT…YQKLPYRGED (208 aa). The UDP-N-acetyl-alpha-D-glucosamine site is built by Arg333 and Lys351. His363 (proton acceptor) is an active-site residue. Tyr366 and Asn377 together coordinate UDP-N-acetyl-alpha-D-glucosamine. Residues 386-387, Ser405, Ala423, and Arg440 contribute to the acetyl-CoA site; that span reads NY.

This sequence in the N-terminal section; belongs to the N-acetylglucosamine-1-phosphate uridyltransferase family. It in the C-terminal section; belongs to the transferase hexapeptide repeat family. As to quaternary structure, homotrimer. Requires Mg(2+) as cofactor.

The protein resides in the cytoplasm. It catalyses the reaction alpha-D-glucosamine 1-phosphate + acetyl-CoA = N-acetyl-alpha-D-glucosamine 1-phosphate + CoA + H(+). The catalysed reaction is N-acetyl-alpha-D-glucosamine 1-phosphate + UTP + H(+) = UDP-N-acetyl-alpha-D-glucosamine + diphosphate. The protein operates within nucleotide-sugar biosynthesis; UDP-N-acetyl-alpha-D-glucosamine biosynthesis; N-acetyl-alpha-D-glucosamine 1-phosphate from alpha-D-glucosamine 6-phosphate (route II): step 2/2. It participates in nucleotide-sugar biosynthesis; UDP-N-acetyl-alpha-D-glucosamine biosynthesis; UDP-N-acetyl-alpha-D-glucosamine from N-acetyl-alpha-D-glucosamine 1-phosphate: step 1/1. It functions in the pathway bacterial outer membrane biogenesis; LPS lipid A biosynthesis. Functionally, catalyzes the last two sequential reactions in the de novo biosynthetic pathway for UDP-N-acetylglucosamine (UDP-GlcNAc). The C-terminal domain catalyzes the transfer of acetyl group from acetyl coenzyme A to glucosamine-1-phosphate (GlcN-1-P) to produce N-acetylglucosamine-1-phosphate (GlcNAc-1-P), which is converted into UDP-GlcNAc by the transfer of uridine 5-monophosphate (from uridine 5-triphosphate), a reaction catalyzed by the N-terminal domain. The protein is Bifunctional protein GlmU of Levilactobacillus brevis (strain ATCC 367 / BCRC 12310 / CIP 105137 / JCM 1170 / LMG 11437 / NCIMB 947 / NCTC 947) (Lactobacillus brevis).